We begin with the raw amino-acid sequence, 631 residues long: Mercuric reductase (631 aa).

2 consecutive HMA domains span residues 2–66 (KKYR…YHPG) and 81–145 (KKYR…YQPG). Positions 13, 16, 92, and 95 each coordinate a metal cation. Ala181, Gly201, and Thr206 together coordinate FAD. A disulfide bridge links Cys207 with Cys212. Residues Lys216, Asp472, and Val480 each coordinate FAD. Hg(2+) contacts are provided by Cys628 and Cys629.

It belongs to the class-I pyridine nucleotide-disulfide oxidoreductase family. In terms of assembly, homodimer. FAD serves as cofactor.

The enzyme catalyses Hg + NADP(+) + H(+) = Hg(2+) + NADPH. Resistance to Hg(2+) in bacteria appears to be governed by a specialized system which includes mercuric reductase. MerA protein is responsible for volatilizing mercury as Hg(0). This Bacillus cereus protein is Mercuric reductase (merA).